The chain runs to 263 residues: Endonuclease 8 (263 aa).

Pro-2 serves as the catalytic Schiff-base intermediate with DNA. Glu-3 (proton donor) is an active-site residue. The active-site Proton donor; for beta-elimination activity is the Lys-53. The DNA site is built by Gln-70, Arg-125, and Asn-169. The segment at 229–263 (KVFHREGKACERCGGVIERSTLSSRPFYGCPVCQK) adopts an FPG-type zinc-finger fold. The active-site Proton donor; for delta-elimination activity is the Arg-253.

This sequence belongs to the FPG family. It depends on Zn(2+) as a cofactor.

The catalysed reaction is 2'-deoxyribonucleotide-(2'-deoxyribose 5'-phosphate)-2'-deoxyribonucleotide-DNA = a 3'-end 2'-deoxyribonucleotide-(2,3-dehydro-2,3-deoxyribose 5'-phosphate)-DNA + a 5'-end 5'-phospho-2'-deoxyribonucleoside-DNA + H(+). Involved in base excision repair of DNA damaged by oxidation or by mutagenic agents. Acts as a DNA glycosylase that recognizes and removes damaged bases. Has a preference for oxidized pyrimidines, such as thymine glycol, 5,6-dihydrouracil and 5,6-dihydrothymine. Has AP (apurinic/apyrimidinic) lyase activity and introduces nicks in the DNA strand. Cleaves the DNA backbone by beta-delta elimination to generate a single-strand break at the site of the removed base with both 3'- and 5'-phosphates. In Enterobacter sp. (strain 638), this protein is Endonuclease 8.